Consider the following 677-residue polypeptide: DNA gyrase subunit B, novobiocin-resistant (677 aa).

The disordered stretch occupies residues 1–23 (MTTYDTRTATDTRGSEQPGHVGT). The novobiocin-binding stretch occupies residues 154–295 (IWTDGHRWTQ…RLLSAEIALQ (142 aa)). The region spanning 456 to 570 (SEIFIVEGDS…EGHVHLSRPP (115 aa)) is the Toprim domain. The Mg(2+) site is built by Glu-462, Asp-535, and Asp-537.

The protein belongs to the type II topoisomerase GyrB family. As to quaternary structure, heterotetramer, composed of two GyrA and two GyrB chains. In the heterotetramer, GyrA contains the active site tyrosine that forms a transient covalent intermediate with DNA, while GyrB binds cofactors and catalyzes ATP hydrolysis. Mg(2+) is required as a cofactor. Requires Mn(2+) as cofactor. It depends on Ca(2+) as a cofactor.

It localises to the cytoplasm. The catalysed reaction is ATP-dependent breakage, passage and rejoining of double-stranded DNA.. A type II topoisomerase that negatively supercoils closed circular double-stranded (ds) DNA in an ATP-dependent manner to modulate DNA topology and maintain chromosomes in an underwound state. Negative supercoiling favors strand separation, and DNA replication, transcription, recombination and repair, all of which involve strand separation. Also able to catalyze the interconversion of other topological isomers of dsDNA rings, including catenanes and knotted rings. Type II topoisomerases break and join 2 DNA strands simultaneously in an ATP-dependent manner. The chain is DNA gyrase subunit B, novobiocin-resistant from Streptomyces niveus (Streptomyces spheroides).